We begin with the raw amino-acid sequence, 193 residues long: Superoxide dismutase [Fe] (193 aa).

Fe cation is bound by residues histidine 27, histidine 74, aspartate 157, and histidine 161.

It belongs to the iron/manganese superoxide dismutase family. Homodimer. It depends on Fe cation as a cofactor.

It catalyses the reaction 2 superoxide + 2 H(+) = H2O2 + O2. Its function is as follows. Destroys superoxide anion radicals which are normally produced within the cells and which are toxic to biological systems. Partially complements double sodA-sodB deletions in E.coli. The chain is Superoxide dismutase [Fe] from Pseudomonas aeruginosa (strain ATCC 15692 / DSM 22644 / CIP 104116 / JCM 14847 / LMG 12228 / 1C / PRS 101 / PAO1).